We begin with the raw amino-acid sequence, 468 residues long: Glutamate--tRNA ligase 2 (468 aa).

The 'HIGH' region motif lies at 9 to 19 (PSPTGHLHIGG). The Zn(2+) site is built by Cys-98, Cys-100, Cys-125, and His-127. Residues 236 to 240 (RLSKR) carry the 'KMSKS' region motif. Lys-239 provides a ligand contact to ATP.

Belongs to the class-I aminoacyl-tRNA synthetase family. Glutamate--tRNA ligase type 1 subfamily. In terms of assembly, monomer. The cofactor is Zn(2+).

The protein resides in the cytoplasm. It carries out the reaction tRNA(Glu) + L-glutamate + ATP = L-glutamyl-tRNA(Glu) + AMP + diphosphate. Functionally, catalyzes the attachment of glutamate to tRNA(Glu) in a two-step reaction: glutamate is first activated by ATP to form Glu-AMP and then transferred to the acceptor end of tRNA(Glu). This Methylococcus capsulatus (strain ATCC 33009 / NCIMB 11132 / Bath) protein is Glutamate--tRNA ligase 2.